A 330-amino-acid polypeptide reads, in one-letter code: 2-oxoisovalerate dehydrogenase subunit alpha (330 aa).

Substrate-binding positions include phenylalanine 44, tyrosine 73, 107-110 (MPGH), and serine 123. 72 to 74 (YYR) contributes to the thiamine diphosphate binding site. Thiamine diphosphate is bound by residues 123-125 (SPV), 153-159 (GEGSSNQ), 183-187 (NKYAI), and histidine 252. The Mg(2+) site is built by glutamate 154, asparagine 183, and tyrosine 185. The tract at residues 249–272 (LTPHSSDDDDSSYRGREEVEEAKK) is disordered. Over residues 259-272 (SSYRGREEVEEAKK) the composition is skewed to basic and acidic residues.

Belongs to the BCKDHA family. Heterotetramer of two alpha and two beta chains. Directly associated with ODBB in the E1 complex. Thiamine diphosphate serves as cofactor.

The enzyme catalyses N(6)-[(R)-lipoyl]-L-lysyl-[protein] + 3-methyl-2-oxobutanoate + H(+) = N(6)-[(R)-S(8)-2-methylpropanoyldihydrolipoyl]-L-lysyl-[protein] + CO2. Its function is as follows. The branched-chain alpha-keto dehydrogenase complex catalyzes the overall conversion of alpha-keto acids to acyl-CoA and CO(2). It contains multiple copies of three enzymatic components: branched-chain alpha-keto acid decarboxylase (E1), lipoamide acyltransferase (E2) and lipoamide dehydrogenase (E3). This Bacillus subtilis (strain 168) protein is 2-oxoisovalerate dehydrogenase subunit alpha (bfmBAA).